A 453-amino-acid chain; its full sequence is UDP-glycosyltransferase 74E1 (453 aa).

Residues S279, 332–334 (SPQ), 349–357 (HCGWNSTLE), and 371–374 (WADQ) contribute to the UDP-alpha-D-glucose site.

This sequence belongs to the UDP-glycosyltransferase family.

The protein is UDP-glycosyltransferase 74E1 (UGT74E1) of Arabidopsis thaliana (Mouse-ear cress).